Consider the following 761-residue polypeptide: Mitochondrial inner membrane m-AAA protease component YTA10 (761 aa).

The Mitochondrial matrix segment spans residues 1-115 (MMMWQRYARG…SLSEYFRSKE (115 aa)). Positions 67–101 (SWTRLNENRPNKEGEGKNNGNKDNNSNKEDGKDKR) are disordered. Basic and acidic residues-rich tracts occupy residues 72-82 (NENRPNKEGEG) and 91-101 (NSNKEDGKDKR). The helical transmembrane segment at 116–136 (FANTMFLTIGFTIIFTLLTPS) threads the bilayer. At 137-223 (SNNSGDDSNR…IPIKYIERSS (87 aa)) the chain is on the mitochondrial intermembrane side. The chain crosses the membrane as a helical span at residues 224–244 (PFTFLFPFLPTIILLGGLYFI). The Mitochondrial matrix segment spans residues 245 to 761 (TRKINSSPPN…EPPEAPAATN (517 aa)). 8 residues coordinate ATP: Val290, Ala291, Thr332, Gly333, Lys334, Thr335, Leu336, and His472. His558 lines the Zn(2+) pocket. Glu559 is a catalytic residue. Residues His562 and Asp634 each coordinate Zn(2+).

The protein in the N-terminal section; belongs to the AAA ATPase family. This sequence in the C-terminal section; belongs to the peptidase M41 family. In terms of assembly, component of the 850 kDa m-AAA protease complex, a heterohexamer composed of YTA12/RCA1 and YTA10/AFG3. Associates with the prohibitin complex, composed of PHB1 and PHB2, inhibiting the activity of the m-AAA protease complex. Zn(2+) serves as cofactor.

The protein resides in the mitochondrion inner membrane. It carries out the reaction ATP + H2O = ADP + phosphate + H(+). ATP hydrolysis is coordinated within m-AAA protease ring complexes: ATP-binding to YTA10/AFG3 inhibits ATP hydrolysis by the neighboring subunit YTA12/RCA1, leading to coordinated ATP hydrolysis within the AAA ATPase ring. Its function is as follows. Catalytic component of the m-AAA protease, a protease that plays a key role in proteostasis of inner mitochondrial membrane proteins. YTA10/AFG3 possesses both ATPase and protease activities: the ATPase activity is required to unfold substrates, threading them into the internal proteolytic cavity for hydrolysis into small peptide fragments. The complex is necessary for the assembly of mitochondrial respiratory chain and ATPase complexes. The m-AAA protease carries out protein quality control in the inner membrane of the mitochondria by mediating degradation of mistranslated or misfolded polypeptides. It also mediates protein maturation of the mitochondrial ribosomal subunit MRPL32/bL32m by catalyzing the cleavage of the presequence of MRPL32/bL32m prior to assembly into the mitochondrial ribosome. Promotes maturation of cytochrome c peroxidase (CCP1) by acting as a membrane protein dislocase via its ATPase activity: pulls the CCP1 transmembrane to the matrix prior to processing by the rhomboid protease PCP1. The membrane protein dislocase activity is also required to dislocate moderately hydrophobic transmembrane segments from the membrane. This is Mitochondrial inner membrane m-AAA protease component YTA10 from Saccharomyces cerevisiae (strain ATCC 204508 / S288c) (Baker's yeast).